The sequence spans 528 residues: Lanosterol 14-alpha demethylase (528 aa).

The chain crosses the membrane as a helical span at residues 15-37 (LSLSVTQQISILLGVPFVYNLVW). Tyrosine 64 serves as a coordination point for oteseconazole. An itraconazole-binding site is contributed by tyrosine 118. Glycine 307 serves as a coordination point for posaconazole. Residue histidine 377 participates in oteseconazole binding. Cysteine 470 contributes to the heme binding site.

The protein belongs to the cytochrome P450 family. It depends on heme as a cofactor.

It localises to the endoplasmic reticulum membrane. It carries out the reaction a 14alpha-methyl steroid + 3 reduced [NADPH--hemoprotein reductase] + 3 O2 = a Delta(14) steroid + formate + 3 oxidized [NADPH--hemoprotein reductase] + 4 H2O + 4 H(+). It catalyses the reaction a 14alpha-methyl steroid + reduced [NADPH--hemoprotein reductase] + O2 = a 14alpha-hydroxymethyl steroid + oxidized [NADPH--hemoprotein reductase] + H2O + H(+). The catalysed reaction is a 14alpha-hydroxymethyl steroid + reduced [NADPH--hemoprotein reductase] + O2 = a 14alpha-formyl steroid + oxidized [NADPH--hemoprotein reductase] + 2 H2O + H(+). The enzyme catalyses a 14alpha-formyl steroid + reduced [NADPH--hemoprotein reductase] + O2 = a Delta(14) steroid + formate + oxidized [NADPH--hemoprotein reductase] + H2O + 2 H(+). It carries out the reaction lanosterol + 3 reduced [NADPH--hemoprotein reductase] + 3 O2 = 4,4-dimethyl-5alpha-cholesta-8,14,24-trien-3beta-ol + formate + 3 oxidized [NADPH--hemoprotein reductase] + 4 H2O + 4 H(+). It catalyses the reaction lanosterol + reduced [NADPH--hemoprotein reductase] + O2 = 32-hydroxylanosterol + oxidized [NADPH--hemoprotein reductase] + H2O + H(+). The catalysed reaction is 32-hydroxylanosterol + reduced [NADPH--hemoprotein reductase] + O2 = 32-oxolanosterol + oxidized [NADPH--hemoprotein reductase] + 2 H2O + H(+). The enzyme catalyses 32-oxolanosterol + reduced [NADPH--hemoprotein reductase] + O2 = 4,4-dimethyl-5alpha-cholesta-8,14,24-trien-3beta-ol + formate + oxidized [NADPH--hemoprotein reductase] + H2O + 2 H(+). It carries out the reaction eburicol + 3 reduced [NADPH--hemoprotein reductase] + 3 O2 = 14-demethyleburicol + formate + 3 oxidized [NADPH--hemoprotein reductase] + 4 H2O + 4 H(+). It catalyses the reaction eburicol + reduced [NADPH--hemoprotein reductase] + O2 = 32-hydroxyeburicol + oxidized [NADPH--hemoprotein reductase] + H2O + H(+). The catalysed reaction is 32-hydroxyeburicol + reduced [NADPH--hemoprotein reductase] + O2 = 32-oxoeburicol + oxidized [NADPH--hemoprotein reductase] + 2 H2O + H(+). The enzyme catalyses 32-oxoeburicol + reduced [NADPH--hemoprotein reductase] + O2 = 14-demethyleburicol + formate + oxidized [NADPH--hemoprotein reductase] + H2O + 2 H(+). It participates in steroid biosynthesis; zymosterol biosynthesis; zymosterol from lanosterol: step 1/6. With respect to regulation, the catalytic activity is inhibited by the binding of azoles clotrimazole, miconazole, fluconazole, ketoconazole, oteseconazole (VT-1161), tetraconazole, the triazole SCH39304, and the triazole derivative ICI 153066. In terms of biological role, sterol 14alpha-demethylase that plays a critical role in the third module of ergosterol biosynthesis pathway, being ergosterol the major sterol component in fungal membranes that participates in a variety of functions. The third module or late pathway involves the ergosterol synthesis itself through consecutive reactions that mainly occur in the endoplasmic reticulum (ER) membrane. In filamentous fungi, during the initial step of this module, lanosterol (lanosta-8,24-dien-3beta-ol) can be metabolized to eburicol. Sterol 14alpha-demethylase catalyzes the three-step oxidative removal of the 14alpha-methyl group (C-32) of both these sterols in the form of formate, and converts eburicol and lanosterol to 14-demethyleburicol (4,4,24-trimethylergosta-8,14,24(28)-trienol) and 4,4-dimethyl-5alpha-cholesta-8,14,24-trien-3beta-ol, respectively, which are further metabolized by other enzymes in the pathway to ergosterol. Can also use substrates not intrinsic to fungi, such as 24,25-dihydrolanosterol (DHL), producing 4,4-dimethyl-8,14-cholestadien-3-beta-ol, but at lower rates than the endogenous substrates. The protein is Lanosterol 14-alpha demethylase of Candida albicans (strain SC5314 / ATCC MYA-2876) (Yeast).